Consider the following 2210-residue polypeptide: MEAERDLAEDAQWKKIQQNTFTRWANEHLKTIDRSINNLETDLSDGLRLIALIEVLSQKRMPKYNKRPTFRSQKLENVSVALKFLQDEGIKIVNIDSSDIVDCKLKLILGLIWTLILHYSISMPMWDGEDDKQLNGSGHTPKQRLLNWIHAKIPDLPINNFTNDWTTGKAVGALVDACAPGLCPDWELWDPKDAVQNASEAMGLADDWLNVRQLIKPEELVNPNVDEQSMMTYLSQYPNSKLKTGAPLRPKTNPNRVRAYGPGIEPIGPVVGAPANFTVETFSAGKGSVDVDIQGPNGEIEKADVRFNNDKNLTYTVSYIPKSEGSHKVAVKFSGRDIPKSPFPVKVEGHAGDASKVKVTGPGIQPNGVTIKKPTFFDILAKDAGRGVPEVIIIDPANHKTSVAAKVRQLENDTWRCEYVTALQGLHSVNVFYAGTPIPNSPFPVKVAPLSDARKVRASGRGLQATGVRVGDDADFKIYTEGAGEGEPEVRVIGPGGMNQNVMQSKVDGNTYECHYYPTKEGRYVIMVTFAGQEVAKSPFEVKVGPKKESSIVAYGPGLSSGVIGYPAAFVVETNGETGALGFTVAGPSQAEIECHDNGDGSALVKYHPTAVGEYAVHILCDNEDIPKSPFIAQILPRTDFHPELVKASGPGLEKNGVTINQPTSFTVDPSKAGNAPLDVVVQDVFGTKLPVELKNNPDGTKKVTYTPTSGVPHTVEVNYGGVSTPNSPHRVYVGVPVDAAKVQAFGPWLQPGVRPNAATHFNVDAREAGDAELKVKIIHEETKIEVPCRIIDNEDNTYSVEVIPPSKGAYTTTMTYGGQRVPLGEKVVVEQTVDVSKIKVDGLEPSVIMNAATDFMVDMSKVGSNIDSGKLSCAIFDPMGHVLPSKIVQGPTDDIFRIMYTPFEAGRHTIELMYDNIPVPGSPFVVNVKSGCDPARCKAYGPGLEKGLTNQKNKFTVETKGAGNGGLSLAIEGPSEAKMTCTDNRDGSCDVDYLATDPGEYDITIRFADKHIPGSPFRVLVEETVDPSKVKVYGPGIEHGQVRESVPTFFNVDVGEAGPGRIAVKLTNSEGIPVDNLRVEDKGNCIYAVHYVPPKAGSVLTCQVKFSEVEVPCSPFVMTVFPKSEPTKVKVKGVNEKKKTPASLPAEFEIDTKQAGQADINVAIKNPKGKAMQPRLEEVSTGTYVVSFVPDECGTYQCSIKYGDKEIEGSPFKLEAFPTGEAKKCKLVEQAPKIQTSGSQSHLKVDAREAGDGAVTCKITNKAGSEIVDIDVIEKDGFFDILYALNDPGDYDINVKFGGKDIPNGSFSIKAVESIEQYSHSEYIEEHTTKVVQQTTQSELVNGKSEITYRSVAFEKLPLPTTGGNVTAEVRMPSGKVDKPVIQDNRDGTVSVKYDPREEGSHELVVKYNGEPVQGSPFKFHVDSITSGYVTAYGPGLTHGVTGEPANFTISTKGASAGGLTMAVEGPSKADINYHDNKDGTVSVQYLPTAPGEYQVSVRFGDKHIKGSPYFAKITGEGRKRNQISVGSCSEVTMPGDITDDDLRALNASIQAPSGLEEPCFLKRMPTGNIGISFTPREIGEHLVSVKRLGKHINNSPFKVTVCEREVGDAKKVKVSGTGLKEGQTHADNIFSVDTRNAGFGGLSVSIEGPSKAEIQCTDKDDGTLNISYKPTEPGYYIVNLKFADHHVEGSPFTVKVAGEGSNRKREKIQRERDAVPITEIGSQCKLTFKMPGITSFDLAACVTSPSNVTEDAEIQEVEDGLYAVHFVPKELGVHTVSVRYSEMHIPGSPFQFTVGPLRDSGSHLVKAGGSGLERGVVGEAAEFNVWTREAGGGSLAISVEGPSKADIEFKDRKDGSCDVSYKVTEPGEYRVGLKFNDRHIPDSPFKVYVSPDAGDAHKLEVQQFPQGNIQADAPYQFMVRKNGAKGELDAKIVAPSGTDDDCFIQVIDGEMYSVRFYPRENGIHAIHVKFNGVHIPDSPFRIKVGKDVADPAAVHASGNGLDEVKTGHKADFIINTCNAGVGTLAVSIDGPSKVAMDCTEVEEGYKVRYTPLLPGEHYITVKYNNMHIVGSPFKVNATGDKLADEGAQETSTVIVETVQKVAKGGKNTGVHLPTFKSDASKVVSKGMGLKKAYIGKQNQFSISATDAGNNILYVGMYGPKGPCEEFHVKHAGHNNYNVQYLVRDRGQYVLLIKWGEEHIPGSPFQIDV.

2 consecutive Calponin-homology (CH) domains span residues 15–120 (KIQQ…LHYS) and 139–242 (HTPK…NSKL). Filamin repeat units follow at residues 249-347 (RPKT…PVKV), 349-447 (GHAG…PVKV), 448-544 (APLS…EVKV), 545-635 (GPKK…IAQI), 638-734 (RTDF…RVYV), 735-831 (GVPV…VVVE), 832-929 (QTVD…VVNV), 930-1022 (KSGC…RVLV), 1023-1121 (EETV…VMTV), 1122-1217 (FPKS…KLEA), 1218-1312 (FPTG…SIKA), 1322-1423 (SEYI…KFHV), 1424-1515 (DSIT…FAKI), 1516-1603 (TGEG…KVTV), 1606-1698 (REVG…TVKV), 1699-1796 (AGEG…QFTV), 1799-1891 (LRDS…KVYV), 1893-1986 (PDAG…RIKV), 1988-2079 (KDVA…KVNA), and 2116-2210 (TFKS…QIDV).

This sequence belongs to the filamin family. As to quaternary structure, interacts with Ten-m. Germline-specific in females (at protein level). Expressed in ovary.

It localises to the cytoplasm. The protein localises to the cytoskeleton. The protein resides in the cell membrane. Involved in the germline ring canal formation. May tether actin microfilament within the ovarian ring canal to the cell membrane. Contributes to actin microfilaments organization. The sequence is that of Filamin-A (cher) from Drosophila melanogaster (Fruit fly).